The sequence spans 389 residues: 1-acyl-sn-glycerol-3-phosphate acyltransferase 2 (389 aa).

A helical membrane pass occupies residues 2-22 (VIAAAVIVPLGLLFFISGLAV). The HXXXXD motif signature appears at 91–96 (HRSDID). 2 helical membrane passes run 305 to 325 (LAVV…FLHW) and 333 to 353 (KGIT…QILI). The segment at 357–389 (QSERSTPAKVVPAKPKDNHHPESSSQTETEKEK) is disordered. The span at 370–389 (KPKDNHHPESSSQTETEKEK) shows a compositional bias: basic and acidic residues.

The protein belongs to the 1-acyl-sn-glycerol-3-phosphate acyltransferase family. In terms of assembly, interacts with GPAT9 and DGAT1. In terms of tissue distribution, present in roots, leaves, stems, floral buds and siliques (at protein level). Widely expressed. In contrast to LPAT1, it is not expressed at higher level in leaves.

It is found in the endoplasmic reticulum membrane. The enzyme catalyses a 1-acyl-sn-glycero-3-phosphate + an acyl-CoA = a 1,2-diacyl-sn-glycero-3-phosphate + CoA. Its pathway is phospholipid metabolism; CDP-diacylglycerol biosynthesis; CDP-diacylglycerol from sn-glycerol 3-phosphate: step 2/3. Functionally, converts lysophosphatidic acid (LPA) into phosphatidic acid by incorporating acyl moiety at the 2 position. Has preference for C-18-CoA substrates compared to C-16-CoA substrates. Required for female but not male gametophyte development. The chain is 1-acyl-sn-glycerol-3-phosphate acyltransferase 2 (LPAT2) from Arabidopsis thaliana (Mouse-ear cress).